Consider the following 115-residue polypeptide: MAKYSSKINKIRTFALSLVFVGFLIMYIGVFFKESIWLSTFFMLLGVLSIGLSTVVYFWIGMLSTKAVRVVCPGCEKETKVLGRVDMCMHCREPLTLDPGLEGKEFDESYNRKKS.

2 helical membrane passes run 13–33 (TFALSLVFVGFLIMYIGVFFK) and 41–61 (FFMLLGVLSIGLSTVVYFWIG).

The protein belongs to the UPF0295 family.

The protein resides in the cell membrane. The chain is UPF0295 protein BPUM_0828 from Bacillus pumilus (strain SAFR-032).